The chain runs to 124 residues: Large ribosomal subunit protein bL12 (124 aa).

This sequence belongs to the bacterial ribosomal protein bL12 family. In terms of assembly, homodimer. Part of the ribosomal stalk of the 50S ribosomal subunit. Forms a multimeric L10(L12)X complex, where L10 forms an elongated spine to which 2 to 4 L12 dimers bind in a sequential fashion. Binds GTP-bound translation factors.

Its function is as follows. Forms part of the ribosomal stalk which helps the ribosome interact with GTP-bound translation factors. Is thus essential for accurate translation. This chain is Large ribosomal subunit protein bL12, found in Akkermansia muciniphila (strain ATCC BAA-835 / DSM 22959 / JCM 33894 / BCRC 81048 / CCUG 64013 / CIP 107961 / Muc).